A 300-amino-acid polypeptide reads, in one-letter code: Pantothenate synthetase (300 aa).

30–37 (MGYLHEGH) serves as a coordination point for ATP. Histidine 37 serves as the catalytic Proton donor. A (R)-pantoate-binding site is contributed by glutamine 61. Beta-alanine is bound at residue glutamine 61. 147-150 (GMKD) is a binding site for ATP. Glutamine 153 contacts (R)-pantoate. ATP contacts are provided by residues valine 176 and 184–187 (KSSR).

The protein belongs to the pantothenate synthetase family. In terms of assembly, homodimer.

Its subcellular location is the cytoplasm. It carries out the reaction (R)-pantoate + beta-alanine + ATP = (R)-pantothenate + AMP + diphosphate + H(+). The protein operates within cofactor biosynthesis; (R)-pantothenate biosynthesis; (R)-pantothenate from (R)-pantoate and beta-alanine: step 1/1. Catalyzes the condensation of pantoate with beta-alanine in an ATP-dependent reaction via a pantoyl-adenylate intermediate. This chain is Pantothenate synthetase, found in Geobacillus kaustophilus (strain HTA426).